We begin with the raw amino-acid sequence, 380 residues long: Erythronate-4-phosphate dehydrogenase (380 aa).

Substrate contacts are provided by Ser45 and Thr66. Residues Asp146 and Thr174 each coordinate NAD(+). The active site involves Arg207. Residue Asp231 coordinates NAD(+). Residue Glu236 is part of the active site. Residue His253 is the Proton donor of the active site. Gly256 is a binding site for NAD(+). Tyr257 contacts substrate.

It belongs to the D-isomer specific 2-hydroxyacid dehydrogenase family. PdxB subfamily. As to quaternary structure, homodimer.

The protein resides in the cytoplasm. It catalyses the reaction 4-phospho-D-erythronate + NAD(+) = (R)-3-hydroxy-2-oxo-4-phosphooxybutanoate + NADH + H(+). The protein operates within cofactor biosynthesis; pyridoxine 5'-phosphate biosynthesis; pyridoxine 5'-phosphate from D-erythrose 4-phosphate: step 2/5. Catalyzes the oxidation of erythronate-4-phosphate to 3-hydroxy-2-oxo-4-phosphonooxybutanoate. This Pseudomonas fluorescens (strain ATCC BAA-477 / NRRL B-23932 / Pf-5) protein is Erythronate-4-phosphate dehydrogenase.